The following is a 393-amino-acid chain: Autophagy-related protein 18c (393 aa).

4 WD repeats span residues 27–65 (KEEA…ETFR), 70–114 (DGGF…CISE), 199–239 (AHDS…RLQE), and 244–283 (VDRA…VGED).

This sequence belongs to the WD repeat PROPPIN family. Component of the PI(3,5)P2 regulatory complex at least composed of ATG18, SAC/FIG4, FAB1 and VAC14. Expressed in roots, stems, flowers and leaves.

It localises to the preautophagosomal structure membrane. Its subcellular location is the vacuole membrane. In terms of biological role, the PI(3,5)P2 regulatory complex regulates both the synthesis and turnover of phosphatidylinositol 3,5-bisphosphate (PtdIns(3,5)P2). Required for autophagy. The chain is Autophagy-related protein 18c (ATG18C) from Arabidopsis thaliana (Mouse-ear cress).